Reading from the N-terminus, the 274-residue chain is 2-dehydro-3-deoxyphosphooctonate aldolase (274 aa).

Belongs to the KdsA family.

The protein resides in the cytoplasm. It carries out the reaction D-arabinose 5-phosphate + phosphoenolpyruvate + H2O = 3-deoxy-alpha-D-manno-2-octulosonate-8-phosphate + phosphate. Its pathway is carbohydrate biosynthesis; 3-deoxy-D-manno-octulosonate biosynthesis; 3-deoxy-D-manno-octulosonate from D-ribulose 5-phosphate: step 2/3. It functions in the pathway bacterial outer membrane biogenesis; lipopolysaccharide biosynthesis. The sequence is that of 2-dehydro-3-deoxyphosphooctonate aldolase from Rickettsia bellii (strain OSU 85-389).